The primary structure comprises 340 residues: Uroporphyrinogen decarboxylase (340 aa).

Residues 23 to 27 (RQAGR), Asp-72, Tyr-147, Thr-202, and His-316 each bind substrate.

It belongs to the uroporphyrinogen decarboxylase family. Homodimer.

It localises to the cytoplasm. It carries out the reaction uroporphyrinogen III + 4 H(+) = coproporphyrinogen III + 4 CO2. It functions in the pathway porphyrin-containing compound metabolism; protoporphyrin-IX biosynthesis; coproporphyrinogen-III from 5-aminolevulinate: step 4/4. Its function is as follows. Catalyzes the decarboxylation of four acetate groups of uroporphyrinogen-III to yield coproporphyrinogen-III. In Geobacter metallireducens (strain ATCC 53774 / DSM 7210 / GS-15), this protein is Uroporphyrinogen decarboxylase.